We begin with the raw amino-acid sequence, 1128 residues long: Zinc finger protein 654 (1128 aa).

Positions 498–523 (GFDSLTDQSTGETDPDDVSGVQPKGH) are disordered. 5 C2H2-type zinc fingers span residues 572–594 (FACVICGRKFRNRGLMQKHLKNH), 746–771 (FKCPALGCVRIFKRIGFLNKHAMTVH), 787–809 (GKCKFCQRQFEDSQHFIDHLNRH), 815–839 (YFCLHFNCNESFKLPFQLAQHTKSH), and 844–868 (AQCSFPECHELFEDLPLLYEHEAQH). Positions 891–951 (DSNPNQEKDS…GNERSDDTVS (61 aa)) are disordered. Polar residues-rich tracts occupy residues 903–915 (NEKQTISLPVSTS) and 937–951 (SLVQNGNERSDDTVS). Residues serine 1123 and serine 1127 each carry the phosphoserine modification.

Belongs to the krueppel C2H2-type zinc-finger protein family.

The protein localises to the nucleus. Its function is as follows. May be involved in transcriptional regulation. This chain is Zinc finger protein 654, found in Homo sapiens (Human).